The chain runs to 872 residues: Metabotropic glutamate receptor 2 (872 aa).

A signal peptide spans Met1 to Ala18. Over Glu19–Ala568 the chain is Extracellular. Cys50 and Cys92 are oxidised to a cystine. Arg57, Arg61, Ser145, Ala166, and Thr168 together coordinate L-glutamate. N-linked (GlcNAc...) asparagine glycosylation is found at Asn203 and Asn286. 7 disulfide bridges follow: Cys234–Cys518, Cys355–Cys362, Cys400–Cys407, Cys500–Cys519, Cys504–Cys522, Cys525–Cys537, and Cys540–Cys553. Residue Asp295 coordinates L-glutamate. Asn338 carries N-linked (GlcNAc...) asparagine glycosylation. Residue Lys377 coordinates L-glutamate. Asn402 carries an N-linked (GlcNAc...) asparagine glycan. A glycan (N-linked (GlcNAc...) asparagine) is linked at Asn547. Residues Val569–Phe589 traverse the membrane as a helical segment. Residues Val590–Glu604 lie on the Cytoplasmic side of the membrane. Residues Leu605 to Ala625 traverse the membrane as a helical segment. Residues Lys626 to Thr633 are Extracellular-facing. Cys632 and Cys721 are oxidised to a cystine. Residues Leu634 to Leu651 traverse the membrane as a helical segment. Over Thr652 to Gln679 the chain is Cytoplasmic. Positions Ala677–Ala685 are important for interaction with HTR2A. The helical transmembrane segment at Val680–Val700 threads the bilayer. Residues Glu701–Ala726 are Extracellular-facing. A helical membrane pass occupies residues Ser727–Phe747. Residues Lys748 to Lys760 are Cytoplasmic-facing. Residues Phe761–Tyr781 traverse the membrane as a helical segment. At Val782–Val798 the chain is on the extracellular side. Residues Ser799–Phe819 form a helical membrane-spanning segment. Topologically, residues Gln820–Leu872 are cytoplasmic.

This sequence belongs to the G-protein coupled receptor 3 family. In terms of assembly, forms heterodimers with GRM3 or GRM4. Interacts with GNAI1. Interacts with TAMALIN. Interacts with HTR2A. In terms of tissue distribution, detected in neurons in brain cortex (at protein level).

Its subcellular location is the cell membrane. The protein localises to the synapse. The protein resides in the cell projection. It is found in the dendrite. Dimeric G protein-coupled receptor which is activated by the excitatory neurotransmitter L-glutamate. Plays critical roles in modulating synaptic transmission and neuronal excitability. Upon activation by glutamate, inhibits presynaptic calcium channels, reducing further glutamate release and dampening excitatory signaling. Mechanistically, ligand binding causes a conformation change that triggers signaling via guanine nucleotide-binding proteins (G proteins) and modulates the activity of down-stream effectors, such as adenylate cyclase. May mediate suppression of neurotransmission or may be involved in synaptogenesis or synaptic stabilization. This is Metabotropic glutamate receptor 2 (Grm2) from Mus musculus (Mouse).